The primary structure comprises 359 residues: 3-dehydroquinate synthase (359 aa).

NAD(+) is bound by residues 71–76, 104–108, 128–129, lysine 141, lysine 150, and 168–171; these read DGEQYK, GVVGD, TT, and TLNT. The Zn(2+) site is built by glutamate 183, histidine 247, and histidine 264.

This sequence belongs to the sugar phosphate cyclases superfamily. Dehydroquinate synthase family. Co(2+) is required as a cofactor. The cofactor is Zn(2+). It depends on NAD(+) as a cofactor.

It localises to the cytoplasm. The enzyme catalyses 7-phospho-2-dehydro-3-deoxy-D-arabino-heptonate = 3-dehydroquinate + phosphate. It functions in the pathway metabolic intermediate biosynthesis; chorismate biosynthesis; chorismate from D-erythrose 4-phosphate and phosphoenolpyruvate: step 2/7. Its function is as follows. Catalyzes the conversion of 3-deoxy-D-arabino-heptulosonate 7-phosphate (DAHP) to dehydroquinate (DHQ). The polypeptide is 3-dehydroquinate synthase (Coxiella burnetii (strain Dugway 5J108-111)).